The primary structure comprises 161 residues: Large ribosomal subunit protein bL9 (161 aa).

This sequence belongs to the bacterial ribosomal protein bL9 family.

Binds to the 23S rRNA. This chain is Large ribosomal subunit protein bL9, found in Blochmanniella floridana.